A 441-amino-acid polypeptide reads, in one-letter code: Serine carboxypeptidase-like 2 (441 aa).

Residues 1-29 (MANKYFSSVLKSLLLLLHLVFLSKQHVDS) form the signal peptide. Intrachain disulfides connect Cys88–Cys331, Cys252–Cys266, and Cys290–Cys297. Residue Asn109 is glycosylated (N-linked (GlcNAc...) asparagine). Ser184 is an active-site residue. Residue Asn350 is glycosylated (N-linked (GlcNAc...) asparagine). Residue Asp366 is part of the active site. N-linked (GlcNAc...) asparagine glycosylation occurs at Asn382. Residue His419 is part of the active site.

It belongs to the peptidase S10 family. As to expression, expressed in seedlings and roots.

The protein localises to the secreted. Its function is as follows. Probable carboxypeptidase. This Arabidopsis thaliana (Mouse-ear cress) protein is Serine carboxypeptidase-like 2 (SCPL2).